The sequence spans 398 residues: ORC1-type DNA replication protein 1 (398 aa).

ATP contacts are provided by residues 67–71 (TGKTA), tyrosine 208, and arginine 220.

This sequence belongs to the CDC6/cdc18 family.

In terms of biological role, involved in regulation of DNA replication. The sequence is that of ORC1-type DNA replication protein 1 (cdc6-1) from Sulfurisphaera tokodaii (strain DSM 16993 / JCM 10545 / NBRC 100140 / 7) (Sulfolobus tokodaii).